A 395-amino-acid chain; its full sequence is Phosphoglycerate kinase (395 aa).

Substrate is bound by residues 21–23, Arg36, 59–62, Arg113, and Arg146; these read DLN and HLGR. ATP-binding positions include Lys197, Glu324, and 350-353; that span reads GGDT.

This sequence belongs to the phosphoglycerate kinase family. In terms of assembly, monomer.

It is found in the cytoplasm. It catalyses the reaction (2R)-3-phosphoglycerate + ATP = (2R)-3-phospho-glyceroyl phosphate + ADP. Its pathway is carbohydrate degradation; glycolysis; pyruvate from D-glyceraldehyde 3-phosphate: step 2/5. In Acinetobacter baylyi (strain ATCC 33305 / BD413 / ADP1), this protein is Phosphoglycerate kinase.